A 348-amino-acid polypeptide reads, in one-letter code: Ephrin-4 (348 aa).

The N-terminal stretch at 1 to 20 (MKQFFEFLITTFLLLGLAAA) is a signal peptide. Residues 21–178 (DEHIVYWNST…SQNMRLSMKV (158 aa)) enclose the Ephrin RBD domain. A glycan (N-linked (GlcNAc...) asparagine) is linked at N28. 2 disulfides stabilise this stretch: C53/C91 and C79/C167. N157 is a glycosylation site (N-linked (GlcNAc...) asparagine). Positions 207–237 (GGQEDEDSDNDNAHLLPRDLEGSTNPKFRRP) are disordered. S329 carries the GPI-anchor amidated serine lipid modification. Positions 330–348 (STSLSTNFAILLAVIYVLY) are cleaved as a propeptide — removed in mature form.

This sequence belongs to the ephrin family. In terms of assembly, interacts with lat-2. In terms of processing, may undergo proteolysis by metalloprotease sup-17 to give rise to a soluble form.

It localises to the cell membrane. Functionally, regulates the formation or stabilization of cell-cell contacts at several stages of epithelial morphogenesis. In early embryonic development, involved in ventral closure of the epidermis. During male tail morphogenesis, regulates precursor cell sorting together with mab-20 and allows the formation of distinct sensory rays. Probably acts as a ligand for lad-2 to regulate axon guidance of several neurons including SDQL, SDQR, SMD and PLN neurons during neurogenesis. In Caenorhabditis elegans, this protein is Ephrin-4 (efn-4).